We begin with the raw amino-acid sequence, 1388 residues long: DNA-directed RNA polymerase subunit beta (1388 aa).

This sequence belongs to the RNA polymerase beta chain family. As to quaternary structure, the RNAP catalytic core consists of 2 alpha, 1 beta, 1 beta' and 1 omega subunit. When a sigma factor is associated with the core the holoenzyme is formed, which can initiate transcription.

The catalysed reaction is RNA(n) + a ribonucleoside 5'-triphosphate = RNA(n+1) + diphosphate. Functionally, DNA-dependent RNA polymerase catalyzes the transcription of DNA into RNA using the four ribonucleoside triphosphates as substrates. The chain is DNA-directed RNA polymerase subunit beta from Xylella fastidiosa (strain 9a5c).